The chain runs to 62 residues: Large ribosomal subunit protein uL30 (62 aa).

This sequence belongs to the universal ribosomal protein uL30 family. Part of the 50S ribosomal subunit.

The protein is Large ribosomal subunit protein uL30 of Cereibacter sphaeroides (strain ATCC 17029 / ATH 2.4.9) (Rhodobacter sphaeroides).